We begin with the raw amino-acid sequence, 318 residues long: MNQLDALRQWTTVVADTGDFKQLAISRPQDATTNPSLILKAVQKPEYRPLLDEAVSKHAGKPLDEVIDRLLVRFGTEILSIIPGRVSTEVDARLSFDTAATVARGERIVALYKAEGIDTEKRLLIKVASTWEGIEAARTLEQKGIRTNLTLLFSFAQAVACGAAGVQLISPFVGRIYDWYKKSAGAQWNEAASAGANDPGVKSVRQIFEYYKQHGIKTEVMGASFRNVGQIRALAGCDLLTISPELLAELAASNEPLAHALDAKAATGGDVAKVSYDEAGFRFALNEDAMATEKLAEGIRAFAADAVKLEKLMQESGK.

Residue K126 is the Schiff-base intermediate with substrate of the active site.

The protein belongs to the transaldolase family. Type 1 subfamily. As to quaternary structure, homodimer.

It is found in the cytoplasm. The enzyme catalyses D-sedoheptulose 7-phosphate + D-glyceraldehyde 3-phosphate = D-erythrose 4-phosphate + beta-D-fructose 6-phosphate. The protein operates within carbohydrate degradation; pentose phosphate pathway; D-glyceraldehyde 3-phosphate and beta-D-fructose 6-phosphate from D-ribose 5-phosphate and D-xylulose 5-phosphate (non-oxidative stage): step 2/3. Transaldolase is important for the balance of metabolites in the pentose-phosphate pathway. The polypeptide is Transaldolase (Variovorax paradoxus (strain S110)).